A 688-amino-acid polypeptide reads, in one-letter code: Potassium-transporting ATPase ATP-binding subunit (688 aa).

Helical transmembrane passes span 37–57, 65–85, 219–239, and 262–282; these read FLVY…LVGI, ILGI…AEAI, IALQ…TVSL, and VALL…SIGI. Aspartate 313 acts as the 4-aspartylphosphate intermediate in catalysis. Residues aspartate 350, glutamate 354, 383 to 390, and lysine 401 each bind ATP; that span reads FTAKTRMS. Residues aspartate 524 and aspartate 528 each contribute to the Mg(2+) site. 3 consecutive transmembrane segments (helical) span residues 594–614, 622–642, and 668–688; these read FAII…LNIM, AIFS…PLAL, and IIVP…IGIV.

It belongs to the cation transport ATPase (P-type) (TC 3.A.3) family. Type IA subfamily. As to quaternary structure, the system is composed of three essential subunits: KdpA, KdpB and KdpC.

It localises to the cell membrane. The catalysed reaction is K(+)(out) + ATP + H2O = K(+)(in) + ADP + phosphate + H(+). Part of the high-affinity ATP-driven potassium transport (or Kdp) system, which catalyzes the hydrolysis of ATP coupled with the electrogenic transport of potassium into the cytoplasm. This subunit is responsible for energy coupling to the transport system and for the release of the potassium ions to the cytoplasm. The sequence is that of Potassium-transporting ATPase ATP-binding subunit from Clostridium botulinum (strain Alaska E43 / Type E3).